Here is a 231-residue protein sequence, read N- to C-terminus: Biosynthetic peptidoglycan transglycosylase (231 aa).

Residues 10–30 traverse the membrane as a helical segment; that stretch reads LLLLGLIGLFLVWQLWLLGWV.

Belongs to the glycosyltransferase 51 family.

Its subcellular location is the cell inner membrane. The catalysed reaction is [GlcNAc-(1-&gt;4)-Mur2Ac(oyl-L-Ala-gamma-D-Glu-L-Lys-D-Ala-D-Ala)](n)-di-trans,octa-cis-undecaprenyl diphosphate + beta-D-GlcNAc-(1-&gt;4)-Mur2Ac(oyl-L-Ala-gamma-D-Glu-L-Lys-D-Ala-D-Ala)-di-trans,octa-cis-undecaprenyl diphosphate = [GlcNAc-(1-&gt;4)-Mur2Ac(oyl-L-Ala-gamma-D-Glu-L-Lys-D-Ala-D-Ala)](n+1)-di-trans,octa-cis-undecaprenyl diphosphate + di-trans,octa-cis-undecaprenyl diphosphate + H(+). Its pathway is cell wall biogenesis; peptidoglycan biosynthesis. Functionally, peptidoglycan polymerase that catalyzes glycan chain elongation from lipid-linked precursors. This is Biosynthetic peptidoglycan transglycosylase from Dechloromonas aromatica (strain RCB).